A 231-amino-acid chain; its full sequence is Trypsin-2 (231 aa).

Residues 1 to 4 (AAFA) form the signal peptide. Residues 5–9 (TEDDK) constitute a propeptide, activation peptide. One can recognise a Peptidase S1 domain in the interval 10–229 (IVGGYECKAY…FNDWLTSTMA (220 aa)). 6 cysteine pairs are disulfide-bonded: Cys-16–Cys-145, Cys-34–Cys-50, Cys-118–Cys-218, Cys-125–Cys-191, Cys-156–Cys-170, and Cys-181–Cys-205. His-49 serves as the catalytic Charge relay system. Positions 61, 63, 66, and 71 each coordinate Ca(2+). Asp-93 acts as the Charge relay system in catalysis. Residue Ser-185 is the Charge relay system of the active site.

The protein belongs to the peptidase S1 family. The cofactor is Ca(2+).

The protein localises to the secreted. Its subcellular location is the extracellular space. The enzyme catalyses Preferential cleavage: Arg-|-Xaa, Lys-|-Xaa.. The protein is Trypsin-2 of Salmo salar (Atlantic salmon).